Reading from the N-terminus, the 1416-residue chain is K homology domain-containing protein 4 (1416 aa).

5 disordered regions span residues 25–76 (NPNG…TSMR), 108–174 (KAEA…TRSS), 196–225 (VNSSSTTHSASNSISANHVQQDRGISLSQS), 255–320 (QNDE…FPGR), and 341–385 (SSLN…MPKP). 3 stretches are compositionally biased toward low complexity: residues 196–213 (VNSSSTTHSASNSISANH), 273–285 (QSSFSSLQSLDQL), and 341–350 (SSLNPPASGS). Polar residues predominate over residues 357 to 369 (GLSSAQPLRSPQP). KH domains follow at residues 412–504 (FKST…VILD), 508–594 (GLRS…QVSM), 747–816 (FEVR…EELP), 817–892 (AEMS…SVME), and 900–968 (DYIS…DHVP). Disordered regions lie at residues 1215–1240 (AGVSVPTSGGIQFPSQPSLHQQSGHR) and 1289–1416 (HASG…FDRA). The span at 1219–1239 (VPTSGGIQFPSQPSLHQQSGH) shows a compositional bias: polar residues. The segment covering 1343 to 1374 (QQQAQQQLQYQQQQQQQQQQQQQPGYGMPHQP) has biased composition (low complexity). A compositionally biased stretch (polar residues) spans 1391 to 1402 (RNTQNPDSTTMD).

RNA-binding protein that recognizes the sequence AUACCC via its tandem KH domains 3 and 4, probably in order to promote mRNA instability. Plays an essential role in filamentous growth and virulence. The sequence is that of K homology domain-containing protein 4 from Mycosarcoma maydis (Corn smut fungus).